Reading from the N-terminus, the 339-residue chain is 4-dimethylallyltryptophan N-methyltransferase easF (339 aa).

Belongs to the methyltransferase superfamily. Homodimer.

The catalysed reaction is 4-(3-methylbut-2-enyl)-L-tryptophan + S-adenosyl-L-methionine = 4-(3-methylbut-2-enyl)-L-abrine + S-adenosyl-L-homocysteine + H(+). It functions in the pathway alkaloid biosynthesis; ergot alkaloid biosynthesis. Its function is as follows. 4-dimethylallyltryptophan N-methyltransferase; part of the gene cluster that mediates the biosynthesis of fumiclavanine C, a fungal ergot alkaloid. DmaW catalyzes the first step of ergot alkaloid biosynthesis by condensing dimethylallyl diphosphate (DMAP) and tryptophan to form 4-dimethylallyl-L-tryptophan. The second step is catalyzed by the methyltransferase easF that methylates 4-dimethylallyl-L-tryptophan in the presence of S-adenosyl-L-methionine, resulting in the formation of 4-dimethylallyl-L-abrine. The catalase easC and the FAD-dependent oxidoreductase easE then transform 4-dimethylallyl-L-abrine to chanoclavine-I which is further oxidized by EasD in the presence of NAD(+), resulting in the formation of chanoclavine-I aldehyde. EasA reduces chanoclavine-I aldehyde to dihydrochanoclavine-I aldehyde that spontaneously dehydrates to form 6,8-dimethyl-6,7-didehydroergoline. EasG then catalyzes the reduction of 6,8-dimethyl-6,7-didehydroergoline to form festuclavine. Hydrolysis of festuclavine by easM then leads to the formation of fumigaclavine B which is in turn acetylated by easN to fumigaclavine A. Finally, easL catalyzes the conversion of fumigaclavine A into fumigaclavine C by attaching a dimethylallyl moiety to C-2 of the indole nucleus. The chain is 4-dimethylallyltryptophan N-methyltransferase easF from Aspergillus fumigatus (strain ATCC MYA-4609 / CBS 101355 / FGSC A1100 / Af293) (Neosartorya fumigata).